Consider the following 953-residue polypeptide: GATA zinc finger domain-containing protein 14 (953 aa).

Residues 1-21 (MFEKIPNQNSHSMGDNNTGYY) show a composition bias toward polar residues. Disordered regions lie at residues 1 to 109 (MFEK…SPNR) and 216 to 756 (TYGS…TQPQ). Over residues 22 to 89 (NNNNNNNNNN…QLPSPQLSQP (68 aa)) the composition is skewed to low complexity. The segment covering 90–109 (NSMNTTPNQTSPNLRSSPNR) has biased composition (polar residues). Composition is skewed to low complexity over residues 219–330 (SSNT…VNAN), 342–683 (NIYN…PNSS), and 690–756 (GNNG…TQPQ). The GATA-type zinc-finger motif lies at 893–918 (CTSCGTTQTPEWRKGPAGGKSLCNAC). The interval 934–953 (KVETTSSPPSTSMNVVNLLN) is disordered.

The polypeptide is GATA zinc finger domain-containing protein 14 (gtaN) (Dictyostelium discoideum (Social amoeba)).